We begin with the raw amino-acid sequence, 109 residues long: Lipoprotein BsmA (109 aa).

The signal sequence occupies residues 1–24 (MVSRKRNSVIYRFASLLLVLMLSA). Cys25 is lipidated: N-palmitoyl cysteine. The S-diacylglycerol cysteine moiety is linked to residue Cys25.

The protein belongs to the BhsA/McbA family.

It is found in the cell membrane. Functionally, involved in protection of biofilms against oxidative stress. The polypeptide is Lipoprotein BsmA (bsmA) (Escherichia coli (strain K12)).